The chain runs to 238 residues: MNEFFPLASAAGMTVGLAVCALIVGLALAMFFAVWESAKWRPVAWAGSALVTILRGLPEILVVLFIYFGSSQLLLTLSDGFTINLGFVQIPVQMDIENFDVSPFLCGVIALSLLYAAYASQTLRGALKAVPVGQWESGQALGLSKSAIFFRLVMPQMWRHALPGLGNQWLVLLKDTALVSLISVNDLMLQTKSIATRTQEPFTWYIVAAAIYLVITLLSQYILKRIDLRATRFERRPS.

Over 1–14 (MNEFFPLASAAGMT) the chain is Periplasmic. Residues 11-223 (AGMTVGLAVC…VITLLSQYIL (213 aa)) enclose the ABC transmembrane type-1 domain. Residues 15–35 (VGLAVCALIVGLALAMFFAVW) traverse the membrane as a helical segment. Residues 36–48 (ESAKWRPVAWAGS) lie on the Cytoplasmic side of the membrane. A helical transmembrane segment spans residues 49 to 69 (ALVTILRGLPEILVVLFIYFG). The Periplasmic segment spans residues 70–98 (SSQLLLTLSDGFTINLGFVQIPVQMDIEN). A helical transmembrane segment spans residues 99–119 (FDVSPFLCGVIALSLLYAAYA). The Cytoplasmic portion of the chain corresponds to 120-168 (SQTLRGALKAVPVGQWESGQALGLSKSAIFFRLVMPQMWRHALPGLGNQ). A helical transmembrane segment spans residues 169 to 189 (WLVLLKDTALVSLISVNDLML). Residues 190-201 (QTKSIATRTQEP) are Periplasmic-facing. Residues 202 to 222 (FTWYIVAAAIYLVITLLSQYI) form a helical membrane-spanning segment. Over 223–238 (LKRIDLRATRFERRPS) the chain is Cytoplasmic.

The protein belongs to the binding-protein-dependent transport system permease family. HisMQ subfamily. In terms of assembly, the complex is composed of two ATP-binding proteins (ArtP), two transmembrane proteins (ArtM and ArtQ) and two solute-binding proteins (ArtJ and ArtI).

The protein localises to the cell inner membrane. Part of the ABC transporter complex ArtPIQMJ involved in arginine transport. Probably responsible for the translocation of the substrate across the membrane. The protein is Arginine ABC transporter permease protein ArtQ (artQ) of Escherichia coli O6:H1 (strain CFT073 / ATCC 700928 / UPEC).